A 155-amino-acid chain; its full sequence is 17.6 kDa class II heat shock protein (155 aa).

The sHSP domain maps to 38–155; the sequence is DAKAMAATPA…KPKTIQVQVA (118 aa).

The protein belongs to the small heat shock protein (HSP20) family. May form oligomeric structures.

It is found in the cytoplasm. The sequence is that of 17.6 kDa class II heat shock protein (HSP17.6) from Arabidopsis thaliana (Mouse-ear cress).